The chain runs to 248 residues: Probable phosphatase Sfri_3709 (248 aa).

His-8, His-10, His-16, His-41, Glu-74, His-102, His-132, Asp-193, and His-195 together coordinate Zn(2+).

Belongs to the PHP family. It depends on Zn(2+) as a cofactor.

The chain is Probable phosphatase Sfri_3709 from Shewanella frigidimarina (strain NCIMB 400).